We begin with the raw amino-acid sequence, 192 residues long: Cytidylate kinase (192 aa).

7 to 15 is a binding site for ATP; that stretch reads GPPGSGKST.

The protein belongs to the cytidylate kinase family. Type 2 subfamily.

It is found in the cytoplasm. It catalyses the reaction CMP + ATP = CDP + ADP. The enzyme catalyses dCMP + ATP = dCDP + ADP. This Halorubrum lacusprofundi (strain ATCC 49239 / DSM 5036 / JCM 8891 / ACAM 34) protein is Cytidylate kinase.